The primary structure comprises 343 residues: CMP-N-acetylneuraminate-beta-galactosamide-alpha-2,3-sialyltransferase 1 (343 aa).

The Cytoplasmic segment spans residues 1–11; that stretch reads MAPMRKKSTLK. A helical; Signal-anchor for type II membrane protein membrane pass occupies residues 12-27; it reads LLTLLVLFIFLTSFFL. A glycan (N-linked (GlcNAc...) asparagine) is linked at asparagine 28. At 28 to 343 the chain is on the lumenal side; the sequence is NYSHTVVTTA…INKIRIFKGR (316 aa). 3 cysteine pairs are disulfide-bonded: cysteine 62/cysteine 67, cysteine 64/cysteine 142, and cysteine 145/cysteine 284. The N-linked (GlcNAc...) asparagine glycan is linked to asparagine 82. Glutamine 108 provides a ligand contact to substrate. An N-linked (GlcNAc...) asparagine glycan is attached at asparagine 117. Residues asparagine 150, asparagine 173, tyrosine 233, tyrosine 269, glycine 273, glycine 293, histidine 302, and histidine 319 each contribute to the substrate site. An N-linked (GlcNAc...) asparagine glycan is attached at asparagine 326.

This sequence belongs to the glycosyltransferase 29 family. The soluble form derives from the membrane form by proteolytic processing. The long isoform is abundant in salivary gland, liver, lung, and colon mucosa. Both long and short forms are detected in submaxillary salivary glands.

Its subcellular location is the golgi apparatus. The protein resides in the golgi stack membrane. It is found in the trans-Golgi network membrane. The protein localises to the secreted. It catalyses the reaction a beta-D-galactosyl-(1-&gt;3)-N-acetyl-alpha-D-galactosaminyl derivative + CMP-N-acetyl-beta-neuraminate = an N-acetyl-alpha-neuraminyl-(2-&gt;3)-beta-D-galactosyl-(1-&gt;3)-N-acetyl-alpha-D-galactosaminyl derivative + CMP + H(+). The enzyme catalyses a ganglioside GM1 (d18:1(4E)) + CMP-N-acetyl-beta-neuraminate = a ganglioside GD1a (d18:1(4E)) + CMP + H(+). The catalysed reaction is ganglioside GM1 (d18:1(4E)/18:0) + CMP-N-acetyl-beta-neuraminate = ganglioside GD1a (18:1(4E)/18:0) + CMP + H(+). It carries out the reaction a ganglioside GA1 (d18:1(4E)) + CMP-N-acetyl-beta-neuraminate = a ganglioside GM1b (d18:1(4E)) + CMP + H(+). It catalyses the reaction a ganglioside GD1b + CMP-N-acetyl-beta-neuraminate = a ganglioside GT1b + CMP + H(+). The enzyme catalyses a 3-O-[beta-D-galactosyl-(1-&gt;3)-N-acetyl-alpha-D-galactosaminyl]-L-threonyl-[protein] + CMP-N-acetyl-beta-neuraminate = a 3-O-[N-acetyl-alpha-neuraminyl-(2-&gt;3)-beta-D-galactosyl-(1-&gt;3)-N-acetyl-alpha-D-galactosaminyl]-L-threonyl-[protein] + CMP + H(+). The catalysed reaction is a 3-O-[beta-D-galactosyl-(1-&gt;3)-N-acetyl-alpha-D-galactosaminyl]-L-seryl-[protein] + CMP-N-acetyl-beta-neuraminate = 3-O-[N-acetyl-alpha-neuraminyl-(2-&gt;3)-beta-D-galactosyl-(1-&gt;3)-N-acetyl-alpha-D-galactosaminyl]-L-seryl-[protein] + CMP + H(+). It participates in protein modification; protein glycosylation. Its pathway is glycolipid biosynthesis. Its function is as follows. A beta-galactoside alpha2-&gt;3 sialyltransferase involved in terminal sialylation of glycoproteins and glycolipids. Catalyzes the transfer of sialic acid (N-acetyl-neuraminic acid; Neu5Ac) from the nucleotide sugar donor CMP-Neu5Ac onto acceptor Galbeta-(1-&gt;3)-GalNAc-terminated glycoconjugates through an alpha2-3 linkage. Adds sialic acid to the core 1 O-glycan, Galbeta-(1-&gt;3)-GalNAc-O-Ser/Thr, which is a major structure of mucin-type O-glycans. As part of a homeostatic mechanism that regulates CD8-positive T cell numbers, sialylates core 1 O-glycans of T cell glycoproteins, SPN/CD43 and PTPRC/CD45. Prevents premature apoptosis of thymic CD8-positive T cells prior to peripheral emigration, whereas in the secondary lymphoid organs controls the survival of CD8-positive memory T cells generated following a successful immune response. Transfers sialic acid to asialofetuin, presumably onto Galbeta-(1-&gt;3)-GalNAc-O-Ser. Sialylates GM1a, GA1 and GD1b gangliosides to form GD1a, GM1b and GT1b, respectively. The polypeptide is CMP-N-acetylneuraminate-beta-galactosamide-alpha-2,3-sialyltransferase 1 (ST3GAL1) (Sus scrofa (Pig)).